A 93-amino-acid polypeptide reads, in one-letter code: Large ribosomal subunit protein uL23cz/uL23cy (93 aa).

This sequence belongs to the universal ribosomal protein uL23 family. Part of the 50S ribosomal subunit.

The protein localises to the plastid. It localises to the chloroplast. Its function is as follows. Binds to 23S rRNA. The protein is Large ribosomal subunit protein uL23cz/uL23cy (rpl23-A) of Nandina domestica (Heavenly bamboo).